Reading from the N-terminus, the 314-residue chain is Acetaldehyde dehydrogenase 1/2 (314 aa).

12 to 15 serves as a coordination point for NAD(+); that stretch reads SGNI. C130 acts as the Acyl-thioester intermediate in catalysis. NAD(+) is bound by residues 161-169 and N288; that span reads SAGPGTRAN.

The protein belongs to the acetaldehyde dehydrogenase family.

It catalyses the reaction acetaldehyde + NAD(+) + CoA = acetyl-CoA + NADH + H(+). In Rhizorhabdus wittichii (strain DSM 6014 / CCUG 31198 / JCM 15750 / NBRC 105917 / EY 4224 / RW1) (Sphingomonas wittichii), this protein is Acetaldehyde dehydrogenase 1/2.